Here is a 481-residue protein sequence, read N- to C-terminus: WASH complex subunit 1 (481 aa).

Residues 1–54 (MVRMTQKRYLEGQVYSVPLIQPDLRREEAVHQITDALQYLEMISTDIFTRVSES) form a required for WASH complex assembly region. 2 disordered regions span residues 273–417 (SVPA…SGGD) and 429–481 (RRKG…DWEA). Residues 304-341 (APPPPPPPPPPPPEPTHVPVPPPGTSAAPPPPPPPPPM) show a composition bias toward pro residues. Residues 359-481 (KGAPSEVVQP…AADDEDDWEA (123 aa)) form a VCA region. Residues 371 to 393 (GRASLLESIRNAGGIGKANLRNV) form the WH2 domain. Residues 392-407 (NVKERKMEKKKQKEQE) are compositionally biased toward basic and acidic residues.

This sequence belongs to the WASH1 family. Component of the WASH complex.

The protein localises to the early endosome membrane. It localises to the recycling endosome membrane. Functionally, acts as a nucleation-promoting factor at the surface of endosomes, where it recruits and activates the Arp2/3 complex to induce actin polymerization, playing a key role in the fission of tubules that serve as transport intermediates during endosome sorting. This chain is WASH complex subunit 1, found in Danio rerio (Zebrafish).